The sequence spans 432 residues: ATP-dependent RNA helicase RhlB (432 aa).

Positions 9-37 match the Q motif motif; sequence QNFADLGLQPQVIDGLNAKGFIKCTPIQA. Residues 40–219 form the Helicase ATP-binding domain; the sequence is LPVLLAGQDI…FEHMQEPEHV (180 aa). Residue 53 to 60 coordinates ATP; it reads AQTGTGKT. A DEAD box motif is present at residues 165–168; it reads DEAD. The Helicase C-terminal domain occupies 245–390; it reads ALLQTLIEEE…QSDYDASALL (146 aa). The tract at residues 397 to 432 is disordered; that stretch reads LRLQRRPQQNRRNNNGQRQGGNRKHSRPRQPRNTQS. The segment covering 417 to 426 has biased composition (basic residues); sequence GNRKHSRPRQ.

This sequence belongs to the DEAD box helicase family. RhlB subfamily. Component of the RNA degradosome, which is a multiprotein complex involved in RNA processing and mRNA degradation.

It localises to the cytoplasm. The catalysed reaction is ATP + H2O = ADP + phosphate + H(+). In terms of biological role, DEAD-box RNA helicase involved in RNA degradation. Has RNA-dependent ATPase activity and unwinds double-stranded RNA. This Aliivibrio fischeri (strain MJ11) (Vibrio fischeri) protein is ATP-dependent RNA helicase RhlB.